A 390-amino-acid polypeptide reads, in one-letter code: 3-ketoacyl-CoA thiolase (390 aa).

C95 (acyl-thioester intermediate) is an active-site residue. Residues H346 and C376 each act as proton acceptor in the active site.

This sequence belongs to the thiolase-like superfamily. Thiolase family. In terms of assembly, heterotetramer of two alpha chains (FadB) and two beta chains (FadA).

It localises to the cytoplasm. It catalyses the reaction an acyl-CoA + acetyl-CoA = a 3-oxoacyl-CoA + CoA. The protein operates within lipid metabolism; fatty acid beta-oxidation. Its function is as follows. Catalyzes the final step of fatty acid oxidation in which acetyl-CoA is released and the CoA ester of a fatty acid two carbons shorter is formed. The protein is 3-ketoacyl-CoA thiolase of Acinetobacter baumannii (strain AB307-0294).